We begin with the raw amino-acid sequence, 20 residues long: MKVYTDIFTRDEFLSDSYPM.

The 20-residue stretch at 1–20 (MKVYTDIFTRDEFLSDSYPM) folds into the TCTP domain.

This sequence belongs to the TCTP family.

This is Unknown protein NF040 from 2D-PAGE from Naegleria fowleri (Brain eating amoeba).